A 218-amino-acid polypeptide reads, in one-letter code: Insulin-induced gene 2 protein (218 aa).

At 1–21 (MGETDNAPRGPPSFLPHKMNL) the chain is on the cytoplasmic side. The chain crosses the membrane as a helical span at residues 22–44 (LLRGLLLFLIGVFLALVLNLLQV). At 45–63 (QRNVTLFPPDVLSSLFSSA) the chain is on the lumenal side. A helical membrane pass occupies residues 64–81 (WWVPLCCGTAAAAIGLLY). Residues 82-96 (PCIDRHLGEPHKFKR) lie on the Cytoplasmic side of the membrane. The chain crosses the membrane as a helical span at residues 97–119 (EWSSVMRCVAVFVGINHASAKVD). At 120–122 (FAN) the chain is on the lumenal side. A helical transmembrane segment spans residues 123-141 (NTQLSLTLAALSIGLWWTF). Residues 142–146 (DRSRS) lie on the Cytoplasmic side of the membrane. A helical membrane pass occupies residues 147–168 (GLGLGIGISFFATVVSQLLVYN). Residues 169-182 (GVYEYTAPDFLYVR) lie on the Lumenal side of the membrane. The chain crosses the membrane as a helical span at residues 183 to 200 (SWLPCIFFAGGITMGNIG). Residues 201–218 (RQLEMYERLALVEKSHRD) lie on the Cytoplasmic side of the membrane. A KxHxx motif is present at residues 212–218 (VEKSHRD).

It belongs to the INSIG family. As to quaternary structure, interacts with scap; interaction is direct and only takes place in the presence of sterols; it prevents interaction between scap and the coat protein complex II (COPII). Associates with the SCAP-SREBP complex; association is mediated via its interaction with scap and only takes place in the presence of sterols.

It localises to the endoplasmic reticulum membrane. Functionally, oxysterol-binding protein that mediates feedback control of cholesterol synthesis by controlling both endoplasmic reticulum to Golgi transport of scap and degradation of hmgcr. Acts as a negative regulator of cholesterol biosynthesis by mediating the retention of the SCAP-SREBP complex in the endoplasmic reticulum, thereby blocking the processing of sterol regulatory element-binding proteins (SREBPs). Binds oxysterol, including 22-hydroxycholesterol, 24-hydroxycholesterol, 25-hydroxycholesterol and 27-hydroxycholesterol, regulating interaction with scap and retention of the SCAP-SREBP complex in the endoplasmic reticulum. In presence of oxysterol, interacts with scap, retaining the SCAP-SREBP complex in the endoplasmic reticulum, thereby preventing scap from escorting SREBPs to the Golgi. Sterol deprivation reduce oxysterol-binding, disrupting the interaction between insig2 and scap, thereby promoting Golgi transport of the SCAP-SREBP complex, followed by processing and nuclear translocation of SREBPs. Also regulates cholesterol synthesis by regulating degradation of hmgcr. This Xenopus tropicalis (Western clawed frog) protein is Insulin-induced gene 2 protein.